The chain runs to 460 residues: uncharacterized protein (460 aa).

This is an uncharacterized protein from Haemophilus influenzae (strain ATCC 51907 / DSM 11121 / KW20 / Rd).